The following is a 165-amino-acid chain: Ribosomal RNA large subunit methyltransferase H (165 aa).

Residue G109 coordinates S-adenosyl-L-methionine.

It belongs to the RNA methyltransferase RlmH family. As to quaternary structure, homodimer.

Its subcellular location is the cytoplasm. It carries out the reaction pseudouridine(1915) in 23S rRNA + S-adenosyl-L-methionine = N(3)-methylpseudouridine(1915) in 23S rRNA + S-adenosyl-L-homocysteine + H(+). In terms of biological role, specifically methylates the pseudouridine at position 1915 (m3Psi1915) in 23S rRNA. This is Ribosomal RNA large subunit methyltransferase H from Methylorubrum extorquens (strain CM4 / NCIMB 13688) (Methylobacterium extorquens).